The chain runs to 1587 residues: Pentafunctional AROM polypeptide (1587 aa).

The 3-dehydroquinate synthase stretch occupies residues 1–384; the sequence is MIEPTKISIL…YEPRASVVAN (384 aa). NAD(+)-binding positions include 44 to 46, 81 to 84, 114 to 116, and D119; these read DTN, EVSK, and GGV. R130 contributes to the 7-phospho-2-dehydro-3-deoxy-D-arabino-heptonate binding site. 139–140 lines the NAD(+) pocket; it reads TT. The 7-phospho-2-dehydro-3-deoxy-D-arabino-heptonate site is built by D146 and K152. Residue K161 participates in NAD(+) binding. N162 serves as a coordination point for 7-phospho-2-dehydro-3-deoxy-D-arabino-heptonate. NAD(+) is bound by residues 179-182 and N190; that span reads FLET. E194 serves as a coordination point for Zn(2+). Residues 194–197 and K250 each bind 7-phospho-2-dehydro-3-deoxy-D-arabino-heptonate; that span reads EVIK. The Proton acceptor; for 3-dehydroquinate synthase activity role is filled by E260. Residues 264–268 and H271 contribute to the 7-phospho-2-dehydro-3-deoxy-D-arabino-heptonate site; that span reads RNLLN. Position 271 (H271) interacts with Zn(2+). H275 functions as the Proton acceptor; for 3-dehydroquinate synthase activity in the catalytic mechanism. 7-phospho-2-dehydro-3-deoxy-D-arabino-heptonate-binding residues include H287 and K356. H287 contributes to the Zn(2+) binding site. Residues 397–842 form an EPSP synthase region; the sequence is VFPGVSPKST…WDTLRLKFAV (446 aa). The active-site For EPSP synthase activity is C824. The interval 864 to 1055 is shikimate kinase; that stretch reads SASVFIIGMR…KKKQHSFFVS (192 aa). ATP is bound at residue 871-878; the sequence is GMRGAGKT. A 3-dehydroquinase region spans residues 1056–1276; sequence LTLPDLRPAG…AAPGQLSATE (221 aa). The active-site Proton acceptor; for 3-dehydroquinate dehydratase activity is the H1179. Catalysis depends on K1207, which acts as the Schiff-base intermediate with substrate; for 3-dehydroquinate dehydratase activity. The interval 1289–1587 is shikimate dehydrogenase; the sequence is KKRFALFGTP…RDAVLGTKAD (299 aa).

This sequence in the N-terminal section; belongs to the sugar phosphate cyclases superfamily. Dehydroquinate synthase family. In the 2nd section; belongs to the EPSP synthase family. The protein in the 3rd section; belongs to the shikimate kinase family. It in the 4th section; belongs to the type-I 3-dehydroquinase family. This sequence in the C-terminal section; belongs to the shikimate dehydrogenase family. As to quaternary structure, homodimer. The cofactor is Zn(2+).

Its subcellular location is the cytoplasm. The enzyme catalyses 7-phospho-2-dehydro-3-deoxy-D-arabino-heptonate = 3-dehydroquinate + phosphate. It carries out the reaction 3-dehydroquinate = 3-dehydroshikimate + H2O. It catalyses the reaction shikimate + NADP(+) = 3-dehydroshikimate + NADPH + H(+). The catalysed reaction is shikimate + ATP = 3-phosphoshikimate + ADP + H(+). The enzyme catalyses 3-phosphoshikimate + phosphoenolpyruvate = 5-O-(1-carboxyvinyl)-3-phosphoshikimate + phosphate. The protein operates within metabolic intermediate biosynthesis; chorismate biosynthesis; chorismate from D-erythrose 4-phosphate and phosphoenolpyruvate: step 2/7. It functions in the pathway metabolic intermediate biosynthesis; chorismate biosynthesis; chorismate from D-erythrose 4-phosphate and phosphoenolpyruvate: step 3/7. Its pathway is metabolic intermediate biosynthesis; chorismate biosynthesis; chorismate from D-erythrose 4-phosphate and phosphoenolpyruvate: step 4/7. It participates in metabolic intermediate biosynthesis; chorismate biosynthesis; chorismate from D-erythrose 4-phosphate and phosphoenolpyruvate: step 5/7. The protein operates within metabolic intermediate biosynthesis; chorismate biosynthesis; chorismate from D-erythrose 4-phosphate and phosphoenolpyruvate: step 6/7. Its function is as follows. The AROM polypeptide catalyzes 5 consecutive enzymatic reactions in prechorismate polyaromatic amino acid biosynthesis. This is Pentafunctional AROM polypeptide from Aspergillus clavatus (strain ATCC 1007 / CBS 513.65 / DSM 816 / NCTC 3887 / NRRL 1 / QM 1276 / 107).